The primary structure comprises 464 residues: NADH-quinone oxidoreductase subunit N 1 (464 aa).

14 helical membrane-spanning segments follow: residues 6 to 26, 33 to 53, 65 to 85, 98 to 118, 122 to 142, 155 to 175, 192 to 212, 237 to 257, 259 to 279, 285 to 305, 312 to 332, 356 to 376, 401 to 421, and 436 to 456; these read ILPEAILAIGILTVFILELFL, FLSVLAFIFVVLSGYSIFFVN, VDALNLIGKLFILAVTGFVLL, YGELPYLYLIATLGLMVMISS, AIIFTGLELASITMYILVGLF, YLVIGTTGTSMYALGSALVYA, FALGVILIISALALKVSAVPF, IGMYFLFVKLTMYLFSAFPDW, YVVMLLAVLSMFYGNIVAYAQ, LLAYSSIAHAGYFLTALTAVD, LLFYVFVYALATVGAFTVLAI, LASMLALFLFALIGIPPAAVF, ASLISAGYYLKVIVYMFLYSG, and FTVLGTAFLVIFFGLFPHVVL.

This sequence belongs to the complex I subunit 2 family. In terms of assembly, NDH-1 is composed of 14 different subunits. Subunits NuoA, H, J, K, L, M, N constitute the membrane sector of the complex.

It localises to the cell inner membrane. The enzyme catalyses a quinone + NADH + 5 H(+)(in) = a quinol + NAD(+) + 4 H(+)(out). Its function is as follows. NDH-1 shuttles electrons from NADH, via FMN and iron-sulfur (Fe-S) centers, to quinones in the respiratory chain. The immediate electron acceptor for the enzyme in this species is believed to be ubiquinone. Couples the redox reaction to proton translocation (for every two electrons transferred, four hydrogen ions are translocated across the cytoplasmic membrane), and thus conserves the redox energy in a proton gradient. The sequence is that of NADH-quinone oxidoreductase subunit N 1 from Aquifex aeolicus (strain VF5).